Reading from the N-terminus, the 921-residue chain is Leucine--tRNA ligase (921 aa).

A 'HIGH' region motif is present at residues Pro80–His90. Positions Lys667 to Ser671 match the 'KMSKS' region motif. Lys670 is a binding site for ATP.

This sequence belongs to the class-I aminoacyl-tRNA synthetase family.

The protein localises to the cytoplasm. The catalysed reaction is tRNA(Leu) + L-leucine + ATP = L-leucyl-tRNA(Leu) + AMP + diphosphate. The sequence is that of Leucine--tRNA ligase from Psychrobacter arcticus (strain DSM 17307 / VKM B-2377 / 273-4).